Consider the following 286-residue polypeptide: MLLRGIPAAEKILQRLKEEISQSPTSPGLAVVLIGNDPASEVYVGMKVKKATEIGIISKAHKLPSDSTLSSVLKLIERLNQDPSIHGILVQLPLPKHLDSEVILQAISPDKDVDGLHPVNMGKLLLGNFDGLLPCTPAGIIELLNYYEIPLRGRHAAIVGRSNIVGKPLAALMMQKHPQTNCTVTVLHSQSENLPEILKTADIIIAALGAPLFIKETMVAPHAVIVDVGTTRVPADNAKGYTLLGDVDFNNVVTKCAAITPVPGGVGPMTVAMLMSNTWRCYQNFS.

Residues G160–S162, S189, and T230 contribute to the NADP(+) site.

The protein belongs to the tetrahydrofolate dehydrogenase/cyclohydrolase family. As to quaternary structure, homodimer.

The enzyme catalyses (6R)-5,10-methylene-5,6,7,8-tetrahydrofolate + NADP(+) = (6R)-5,10-methenyltetrahydrofolate + NADPH. The catalysed reaction is (6R)-5,10-methenyltetrahydrofolate + H2O = (6R)-10-formyltetrahydrofolate + H(+). The protein operates within one-carbon metabolism; tetrahydrofolate interconversion. In terms of biological role, catalyzes the oxidation of 5,10-methylenetetrahydrofolate to 5,10-methenyltetrahydrofolate and then the hydrolysis of 5,10-methenyltetrahydrofolate to 10-formyltetrahydrofolate. This Chlamydia pneumoniae (Chlamydophila pneumoniae) protein is Bifunctional protein FolD.